The chain runs to 715 residues: Dynein axonemal intermediate chain 7 (715 aa).

Residues 291 to 322 are disordered; it reads AVSKDLQEENKQENESNSVHEEETKAEGQGDV. A compositionally biased stretch (basic and acidic residues) spans 295-318; it reads DLQEENKQENESNSVHEEETKAEG.

Belongs to the DNAI7 family. In terms of assembly, part of the multisubunit axonemal dynein complex formed at least of two heavy chains and a number of intermediate and light chains. Associates with tubulin. Interacts with microtubule. Post-translationally, ubiquitinated. Ubiquitination leads to its degradation through the 26S proteasome. Ubiquitin-proteasome-mediated DNAI7 degradation occurs in mitosis.

It is found in the cell projection. It localises to the cilium. The protein resides in the cytoplasm. Functionally, via its association with the multisubunit axonemal dynein complex, is potentially involved in the regulation of cilia function. May act as a cell cycle regulator. This chain is Dynein axonemal intermediate chain 7, found in Bos taurus (Bovine).